We begin with the raw amino-acid sequence, 425 residues long: UPF0761 membrane protein PXO_04555 (425 aa).

6 helical membrane passes run 48-68 (VFAL…FPAF), 105-125 (FTVA…HSIE), 154-174 (GTML…LPLF), 182-202 (LAEF…IVLI), 219-239 (GALL…VYLG), and 250-270 (ALSA…SVLL).

The protein belongs to the UPF0761 family.

The protein localises to the cell inner membrane. The polypeptide is UPF0761 membrane protein PXO_04555 (Xanthomonas oryzae pv. oryzae (strain PXO99A)).